The sequence spans 341 residues: MSSSTTVFVSGASGFIAQTLVKQLIEKGYKVVGTVRSNEKGDSLKENLKAAKLQSENFTYEIVKDIAVKGAFDDALKKHPEVTVFLHTASPFHFNVTDIEKELLTPAVEGTNNALQAIKTHGPQIKRVVVTSSYAAVGRFADLADPSIPATEESWNPITWEQSLSNPLAGYVGSKKFAEKAAWDFVEKEKPNFTLSVINPVYVFGPQAFEIKNKSQLNTSSEIINGLLNSKPDSKFDNLTGYFIDVRDVAKAHIVAFEKDSIQGQRLILAESPFSTQSILDLIRKDFPQLDSQLPKGDPSQADAWKKAESKIENEKTRELLGFKFIDFKKSIDDSVAQIIG.

2 residues coordinate NADP(+): Lys-40 and Tyr-171.

Belongs to the NAD(P)-dependent epimerase/dehydratase family. Dihydroflavonol-4-reductase subfamily.

The protein localises to the cytoplasm. The catalysed reaction is (S)-lactaldehyde + NADP(+) = methylglyoxal + NADPH + H(+). In terms of biological role, catalyzes the irreversible reduction of the cytotoxic compound methylglyoxal (MG, 2-oxopropanal) to (S)-lactaldehyde. MG is synthesized via a bypath of glycolysis from dihydroxyacetone phosphate and is believed to play a role in cell cycle regulation and stress adaptation. The polypeptide is Putative NADPH-dependent methylglyoxal reductase GRP2 (GRP2) (Candida albicans (strain SC5314 / ATCC MYA-2876) (Yeast)).